Reading from the N-terminus, the 177-residue chain is Adenine phosphoribosyltransferase (177 aa).

The protein belongs to the purine/pyrimidine phosphoribosyltransferase family. Homodimer.

The protein localises to the cytoplasm. It carries out the reaction AMP + diphosphate = 5-phospho-alpha-D-ribose 1-diphosphate + adenine. It functions in the pathway purine metabolism; AMP biosynthesis via salvage pathway; AMP from adenine: step 1/1. Functionally, catalyzes a salvage reaction resulting in the formation of AMP, that is energically less costly than de novo synthesis. The sequence is that of Adenine phosphoribosyltransferase from Leuconostoc citreum (strain KM20).